A 92-amino-acid polypeptide reads, in one-letter code: Acylphosphatase (92 aa).

The region spanning 5–90 is the Acylphosphatase-like domain; sequence TYRLVICGLV…GDFVGFQLRE (86 aa). Catalysis depends on residues R20 and N38.

This sequence belongs to the acylphosphatase family.

It catalyses the reaction an acyl phosphate + H2O = a carboxylate + phosphate + H(+). This is Acylphosphatase (acyP) from Albidiferax ferrireducens (strain ATCC BAA-621 / DSM 15236 / T118) (Rhodoferax ferrireducens).